The following is a 72-amino-acid chain: MAVEKVNSSSSLAEVIDRILDKGIVVDAWVRVSLVGIELLAIEARVVVASVETYLKYAEAVGLTATAAAPAV.

This sequence belongs to the gas vesicle GvpA family. In terms of assembly, the gas vesicle shell is 2 nm thick and consists of a single layer of this protein. It forms helical ribs nearly perpendicular to the long axis of the vesicle.

It localises to the gas vesicle shell. Its function is as follows. Gas vesicles are hollow, gas filled proteinaceous nanostructures found in some microorganisms. During planktonic growth they allow positioning of the organism at a favorable depth for light or nutrient acquisition. GvpA forms the protein shell. This is Gas vesicle protein A from Synechococcus sp. (strain JA-3-3Ab) (Cyanobacteria bacterium Yellowstone A-Prime).